A 682-amino-acid polypeptide reads, in one-letter code: Acyl-CoA synthetase short-chain family member 3, mitochondrial (682 aa).

A mitochondrion-targeting transit peptide spans 1-29 (MKPSWLQCRKVTGAGTLGAPLPGSPSVRG). CoA is bound at residue 222–225 (EPGR). ATP is bound by residues 420-422 (GER) and 441-446 (DHWWQT). Lysine 513 is modified (N6-succinyllysine). Lysine 519 is modified (N6-acetyllysine). ATP is bound by residues aspartate 534, arginine 549, and arginine 560. Residue arginine 619 participates in CoA binding.

This sequence belongs to the ATP-dependent AMP-binding enzyme family.

It localises to the mitochondrion matrix. The enzyme catalyses acetate + ATP + CoA = acetyl-CoA + AMP + diphosphate. The catalysed reaction is propanoate + ATP + CoA = propanoyl-CoA + AMP + diphosphate. It carries out the reaction butanoate + ATP + CoA = butanoyl-CoA + AMP + diphosphate. Catalyzes the synthesis of acetyl-CoA from short-chain fatty acids. Propionate is the preferred substrate but can also utilize acetate and butyrate with a much lower affinity. This is Acyl-CoA synthetase short-chain family member 3, mitochondrial (Acss3) from Mus musculus (Mouse).